The chain runs to 519 residues: Halolysin (519 aa).

A signal peptide (tat-type signal) is located at residues 1-27 (MAGTPNFDRRSFLRLAAAAGLTGMAGV). A propeptide spanning residues 28-116 (TSATPGRSPG…AEKNATHEAL (89 aa)) is cleaved from the precursor. Residues 127-400 (QYAPQQVNAD…SGRVDAANAV (274 aa)) enclose the Peptidase S8 domain. Catalysis depends on charge relay system residues Asp-154, His-193, and Ser-347. The interval 386–425 (STKQGSGRVDAANAVTTDPGDGGGGGGGGSKETTYDGTLS) is disordered. Residues 405–415 (GDGGGGGGGGS) show a composition bias toward gly residues.

It belongs to the peptidase S8 family. Post-translationally, predicted to be exported by the Tat system. The position of the signal peptide cleavage has not been experimentally proven.

Its subcellular location is the secreted. Functionally, probable secreted halophilic serine protease showing proteolytic activity toward the protease general substrate azocasein. The polypeptide is Halolysin (hly) (Haloferax mediterranei (strain ATCC 33500 / DSM 1411 / JCM 8866 / NBRC 14739 / NCIMB 2177 / R-4) (Halobacterium mediterranei)).